The primary structure comprises 209 residues: COP9 signalosome complex subunit 8 (209 aa).

In terms of domain architecture, PCI spans 8 to 179; it reads ESAFSFKKLL…GALDVSFNKF (172 aa). Ser175 is modified (phosphoserine).

It belongs to the CSN8 family. Component of the CSN complex, composed of COPS1/GPS1, COPS2, COPS3, COPS4, COPS5, COPS6, COPS7 (COPS7A or COPS7B), COPS8 and COPS9 isoform 1. In the complex, it probably interacts directly with COPS3, COPS4 and COPS7 (COPS7A or COPS7B).

The protein localises to the cytoplasm. It is found in the nucleus. Functionally, component of the COP9 signalosome complex (CSN), a complex involved in various cellular and developmental processes. The CSN complex is an essential regulator of the ubiquitin (Ubl) conjugation pathway by mediating the deneddylation of the cullin subunits of SCF-type E3 ligase complexes, leading to decrease the Ubl ligase activity of SCF-type complexes such as SCF, CSA or DDB2. The complex is also involved in phosphorylation of p53/TP53, c-jun/JUN, IkappaBalpha/NFKBIA, ITPK1 and IRF8/ICSBP, possibly via its association with CK2 and PKD kinases. CSN-dependent phosphorylation of TP53 and JUN promotes and protects degradation by the Ubl system, respectively. This Homo sapiens (Human) protein is COP9 signalosome complex subunit 8 (COPS8).